The primary structure comprises 251 residues: MLGKKSDFTIHPINVLQDNIVWVWVHNCNAVVVDPSISGPVEKWLLEKNLSLKAILQTHHHDDHIGGTQKLIKTWPEAKVVASKKEHKRIPFQTFSVDDNDIFNLMDAEIKVIEVHGHTDNHIAFYISKQNAKCNILFPGDTLFGGGCGRLLEGSPVQMFESLYKLNSLPENTEIYPAHEYTESNLKWALSLEPGNISIIERLKLIQKKLQKGMSSLPSTLSEERKTNLFLIAENVEKFTMLRKHKDRWKC.

7 residues coordinate Zn(2+): His59, His61, Asp63, His64, His118, Asp141, and His179.

It belongs to the metallo-beta-lactamase superfamily. Glyoxalase II family. Monomer. The cofactor is Zn(2+).

It catalyses the reaction an S-(2-hydroxyacyl)glutathione + H2O = a 2-hydroxy carboxylate + glutathione + H(+). The protein operates within secondary metabolite metabolism; methylglyoxal degradation; (R)-lactate from methylglyoxal: step 2/2. Thiolesterase that catalyzes the hydrolysis of S-D-lactoyl-glutathione to form glutathione and D-lactic acid. This Prochlorococcus marinus (strain NATL2A) protein is Hydroxyacylglutathione hydrolase.